The following is a 210-amino-acid chain: Superoxide dismutase [Mn], mitochondrial (210 aa).

4 residues coordinate Mn(2+): histidine 29, histidine 77, aspartate 163, and histidine 167.

It belongs to the iron/manganese superoxide dismutase family. As to quaternary structure, homotetramer. It depends on Mn(2+) as a cofactor.

It localises to the mitochondrion matrix. The catalysed reaction is 2 superoxide + 2 H(+) = H2O2 + O2. Its function is as follows. Destroys superoxide anion radicals which are normally produced within the cells and which are toxic to biological systems. The sequence is that of Superoxide dismutase [Mn], mitochondrial (sodB) from Aspergillus fumigatus (strain ATCC MYA-4609 / CBS 101355 / FGSC A1100 / Af293) (Neosartorya fumigata).